We begin with the raw amino-acid sequence, 297 residues long: Bax inhibitor 1 (297 aa).

Over M1–K53 the chain is Lumenal. The helical transmembrane segment at V54–V74 threads the bilayer. Residues S75–H85 lie on the Cytoplasmic side of the membrane. The chain crosses the membrane as a helical span at residues I86–S106. Topologically, residues P107 to K146 are lumenal. Residues L147–A167 form a helical membrane-spanning segment. Over Y168–D171 the chain is Cytoplasmic. A helical transmembrane segment spans residues T172 to L192. Residues S193–Y208 lie on the Lumenal side of the membrane. Residues W209–W229 form a helical membrane-spanning segment. Residues N230 to L239 are Cytoplasmic-facing. A helical membrane pass occupies residues Y240–F260. Residues R261 to R270 are Lumenal-facing. The chain crosses the membrane as a helical span at residues C271–A291. Residues N292–N297 lie on the Cytoplasmic side of the membrane.

Belongs to the BI1 family. LFG subfamily.

It localises to the endoplasmic reticulum membrane. The protein localises to the vacuole membrane. It is found in the mitochondrion membrane. In terms of biological role, links the unfolded protein response and programmed cell death and mediates mitochondrial-dependent apoptosis. Induces cell death and disruption of the mitochondrial transmembrane potential via the mitochondrial phosphate carrier MIR1. Dispensible for starvation-induced autophagy. The sequence is that of Bax inhibitor 1 (BXI1) from Saccharomyces cerevisiae (strain ATCC 204508 / S288c) (Baker's yeast).